We begin with the raw amino-acid sequence, 1042 residues long: Starch synthase 3, chloroplastic/amyloplastic (1042 aa).

Residues 1–44 constitute a chloroplast transit peptide; that stretch reads MISYFLNQDFSRKKQGRMAASGPKSSGPRGFGRRTTVGSAQKRT. The interval 1 to 63 is disordered; that stretch reads MISYFLNQDF…NATSTATNEV (63 aa). Positions 54 to 63 are enriched in polar residues; it reads NATSTATNEV. A coiled-coil region spans residues 247–302; sequence ENFLLEEKLREQEKLAKEEAERERQKEEKRRIEAQKAAIEADRAQAKAETQKRREL. K608 is an ADP-alpha-D-glucose binding site.

This sequence belongs to the glycosyltransferase 1 family. Bacterial/plant glycogen synthase subfamily. Expressed in leaves and flowers.

It is found in the plastid. Its subcellular location is the chloroplast. It localises to the amyloplast. It catalyses the reaction [(1-&gt;4)-alpha-D-glucosyl](n) + ADP-alpha-D-glucose = [(1-&gt;4)-alpha-D-glucosyl](n+1) + ADP + H(+). The protein operates within glycan biosynthesis; starch biosynthesis. Involved in the synthesis of glycan chains within amylopectin in leaves. May play a regulatory role in the control of starch accumulation in plastids. The chain is Starch synthase 3, chloroplastic/amyloplastic (SS3) from Arabidopsis thaliana (Mouse-ear cress).